Consider the following 416-residue polypeptide: Histidine--tRNA ligase (416 aa).

The protein belongs to the class-II aminoacyl-tRNA synthetase family. Homodimer.

The protein resides in the cytoplasm. The enzyme catalyses tRNA(His) + L-histidine + ATP = L-histidyl-tRNA(His) + AMP + diphosphate + H(+). In Clostridium kluyveri (strain NBRC 12016), this protein is Histidine--tRNA ligase.